A 364-amino-acid polypeptide reads, in one-letter code: Peptide chain release factor 2 (364 aa).

Residue Gln-252 is modified to N5-methylglutamine.

It belongs to the prokaryotic/mitochondrial release factor family. Post-translationally, methylated by PrmC. Methylation increases the termination efficiency of RF2.

The protein resides in the cytoplasm. Its function is as follows. Peptide chain release factor 2 directs the termination of translation in response to the peptide chain termination codons UGA and UAA. In Clostridium perfringens (strain SM101 / Type A), this protein is Peptide chain release factor 2.